Here is a 33-residue protein sequence, read N- to C-terminus: MEALVYTFLLVSTLGILFFSIFFREPPKVPTQK.

Residues A3–F23 traverse the membrane as a helical segment.

It belongs to the PsbT family. PSII is composed of 1 copy each of membrane proteins PsbA, PsbB, PsbC, PsbD, PsbE, PsbF, PsbH, PsbI, PsbJ, PsbK, PsbL, PsbM, PsbT, PsbY, PsbZ, Psb30/Ycf12, at least 3 peripheral proteins of the oxygen-evolving complex and a large number of cofactors. It forms dimeric complexes.

The protein localises to the plastid. It localises to the chloroplast thylakoid membrane. In terms of biological role, found at the monomer-monomer interface of the photosystem II (PS II) dimer, plays a role in assembly and dimerization of PSII. PSII is a light-driven water plastoquinone oxidoreductase, using light energy to abstract electrons from H(2)O, generating a proton gradient subsequently used for ATP formation. This chain is Photosystem II reaction center protein T, found in Pelargonium hortorum (Common geranium).